The following is a 567-amino-acid chain: Zinc finger protein 143 (567 aa).

7 C2H2-type zinc fingers span residues 230-254 (FRCDYEGCGKLYTTAHHLKVHERSH), 260-284 (YQCDHGGCRKAFATGYGLKSHVRTH), 290-314 (YRCSEENCTKSFKTSGDLQKHVRTH), 320-344 (FKCPFEGCGRSFTTSNIRKVHIRTH), 350-374 (YYCSEPGCGRAFASATNYKNHVRIH), 380-404 (YVCTVPGCDKRFTEYSSLYKHHVVH), and 410-433 (YNCNHCGKTYKQISTLAMHKRTAH). Positions 506 to 520 (SATESGPQHSHNLGG) are enriched in polar residues. The interval 506–525 (SATESGPQHSHNLGGSESRP) is disordered.

This sequence belongs to the GLI C2H2-type zinc-finger protein family.

It localises to the nucleus. Transcriptional activator. Activates the gene for selenocysteine tRNA (tRNAsec). Binds to the activator element (AE) motif of the selenocysteine tRNA gene promoter. This chain is Zinc finger protein 143 (znf143), found in Xenopus tropicalis (Western clawed frog).